Here is a 1000-residue protein sequence, read N- to C-terminus: ATP-dependent DNA/RNA helicase DHX36 (1000 aa).

A required for recruitment to cytoplasmic stress granules region spans residues 1-43; the sequence is MSYDYHQSWSRDGGPRGSGQGSGGGGGGSRGSGGGGGGRGGRG. Residues 1-53 are disordered; it reads MSYDYHQSWSRDGGPRGSGQGSGGGGGGSRGSGGGGGGRGGRGRHPAHLKGRE. The tract at residues 1–96 is required for the pre-miR-134 transport; the sequence is MSYDYHQSWS…IVQLLNSVQA (96 aa). Residues 1 to 192 form a necessary for nuclear and nucleolar caps localizations region; that stretch reads MSYDYHQSWS…KKTDPRYIEM (192 aa). The segment covering 15 to 40 has biased composition (gly residues); that stretch reads PRGSGQGSGGGGGGSRGSGGGGGGRG. Residues 45-67 form a DSM (DHX36-specific motif) region; it reads HPAHLKGREIGLWYAKKQTQKNK. Residues 45–97 are required for G4-DNA- and G4-RNA-binding; it reads HPAHLKGREIGLWYAKKQTQKNKEAERQERAVVHMDERREEQIVQLLNSVQAK. 2 recA-like domain regions span residues 98 to 378 and 379 to 620; these read NDKD…MIHI and PGFT…DYQL. Position 153 is a phosphoserine (S153). The region spanning 209–379 is the Helicase ATP-binding domain; the sequence is VNLINNHQVT…FGNCPMIHIP (171 aa). ATP is bound at residue 225 to 230; sequence GCGKTT. The segment at 257–309 is necessary for interaction with single-stranded DNA at the 3'-end of the G4-DNA structure; that stretch reads RRISAISVAERVAAERAESCGNGNSTGYQIRLQSRLPRKQGSILYCTTGIILQ. Positions 326 to 329 match the DEAH box motif; the sequence is DEIH. 2 residues coordinate Mg(2+): E327 and H329. One can recognise a Helicase C-terminal domain in the interval 469–639; the sequence is ALIRYIVLEE…ELCLQIKILR (171 aa). The interval 490–549 is necessary for interaction with single-stranded DNA at the 3'-end of the G4-DNA structure; that stretch reads WDNISTLHDLLMSQVMFKSDRFLIIPLHSLMPTVNQTQVFKKTPPGVRKIVIATNIAETS. Residues 509–520 carry the Nuclear localization signal motif; sequence DRFLIIPLHSLM. ATP is bound by residues S549 and 594-597; that span reads RAGR. A WH domain region spans residues 621-690; the sequence is PEILRTPLEE…LGVHLARLPV (70 aa). Necessary for interaction with single-stranded DNA at the 3'-end of the G4-DNA structure regions lie at residues 630 to 689, 841 to 852, and 862 to 892; these read ELCL…ARLP, NLGKKRKMVKVH, and HPKSVNVEQTDFHYNWLIYHLKMRTSSIYLY. Residues 833–897 are OB-fold-like subdomains; the sequence is PKVAKIRLNL…SIYLYDCTEV (65 aa). N6-acetyllysine is present on K939.

As to quaternary structure, found in a multi-helicase-TICAM1 complex at least composed of DHX36, DDX1, DDX21 and TICAM1; this complex exists in resting cells with or without dsRNA poly(I:C) ligand stimulation. Interacts (via C-terminus) with TICAM1 (via TIR domain). Interacts (via C-terminus) with DDX21; this interaction serves as bridges to TICAM1. Interacts with TERT; this interaction is dependent on the ability of DHX36 to bind to the G-quadruplex RNA (G4-RNA) structure present in the telomerase RNA template component (TERC). Interacts with DKC1; this interaction is dependent on the ability of DHX36 to bind to the G4-RNA structure present in TERC. Interacts with PARN; this interaction stimulates PARN to enhance uPA mRNA decay. Interacts with EXOSC3; this interaction occurs in a RNase-insensitive manner. Interacts with EXOSC10; this interaction occurs in a RNase-insensitive manner. Interacts with ILF3; this interaction occurs in a RNA-dependent manner. Interacts with ELAVL1; this interaction occurs in an RNA-dependent manner. Interacts with DDX5; this interaction occurs in a RNA-dependent manner. Interacts with DDX17; this interaction occurs in a RNA-dependent manner. Interacts with HDAC1; this interaction occurs in a RNA-dependent manner. Interacts with HDAC3; this interaction occurs in a RNA-dependent manner. Interacts with HDAC4. Interacts with AGO1. Interacts with AGO2. Interacts with ERCC6. It depends on Mg(2+) as a cofactor.

It localises to the nucleus. The protein resides in the cytoplasm. It is found in the cytosol. Its subcellular location is the stress granule. The protein localises to the nucleus speckle. It localises to the chromosome. The protein resides in the telomere. It is found in the mitochondrion. Its subcellular location is the perikaryon. The protein localises to the cell projection. It localises to the dendrite. The protein resides in the axon. It carries out the reaction ATP + H2O = ADP + phosphate + H(+). ATPase activity is enhanced in the presence of homomeric poly(U) RNAs, but not by double-stranded DNA (dsDNA), double-stranded RNA (dsRNA) and tRNA. Multifunctional ATP-dependent helicase that unwinds G-quadruplex (G4) structures. Plays a role in many biological processes such as genomic integrity, gene expression regulations and as a sensor to initiate antiviral responses. G4 structures correspond to helical structures containing guanine tetrads. Binds with high affinity to and unwinds G4 structures that are formed in nucleic acids (G4-DNA and G4-RNA). Plays a role in genomic integrity. Converts the G4-RNA structure present in telomerase RNA template component (TREC) into a double-stranded RNA to promote P1 helix formation that acts as a template boundary ensuring accurate reverse transcription. Plays a role in transcriptional regulation. Resolves G4-DNA structures in promoters of genes, such as YY1, KIT/c-kit and ALPL and positively regulates their expression. Plays a role in post-transcriptional regulation. Unwinds a G4-RNA structure located in the 3'-UTR polyadenylation site of the pre-mRNA TP53 and stimulates TP53 pre-mRNA 3'-end processing in response to ultraviolet (UV)-induced DNA damage. Binds to the precursor-microRNA-134 (pre-miR-134) terminal loop and regulates its transport into the synapto-dendritic compartment. Involved in the pre-miR-134-dependent inhibition of target gene expression and the control of dendritic spine size. Plays a role in the regulation of cytoplasmic mRNA translation and mRNA stability. Binds to both G4-RNA structures and alternative non-quadruplex-forming sequence within the 3'-UTR of the PITX1 mRNA regulating negatively PITX1 protein expression. Binds to both G4-RNA structure in the 5'-UTR and AU-rich elements (AREs) localized in the 3'-UTR of NKX2-5 mRNA to either stimulate protein translation or induce mRNA decay in an ELAVL1-dependent manner, respectively. Also binds to ARE sequences present in several mRNAs mediating exosome-mediated 3'-5' mRNA degradation. Involved in cytoplasmic urokinase-type plasminogen activator (uPA) mRNA decay. Component of a multi-helicase-TICAM1 complex that acts as a cytoplasmic sensor of viral double-stranded RNA (dsRNA) and plays a role in the activation of a cascade of antiviral responses including the induction of pro-inflammatory cytokines via the adapter molecule TICAM1. Required for the early embryonic development and hematopoiesis. Involved in the regulation of cardioblast differentiation and proliferation during heart development. Involved in spermatogonia differentiation. May play a role in ossification. The protein is ATP-dependent DNA/RNA helicase DHX36 of Rattus norvegicus (Rat).